Here is a 149-residue protein sequence, read N- to C-terminus: Protein RhiC (149 aa).

The signal sequence occupies residues 1-23; the sequence is MTATLRAFGWLAAFALTVTFAQG.

It localises to the periplasm. In terms of biological role, may be involved in plant-microbe interaction. The protein is Protein RhiC (rhiC) of Rhizobium leguminosarum bv. viciae.